Reading from the N-terminus, the 95-residue chain is MKAIGLPDDLIQKGKDIKGVSEVVQEGKHFKVTITTGSKMETMTGEKVKTVVRMEGDNKLVTTFKGIKSVTEFNGDTVXNXMTLGXIVFKRVSKR.

2 positions are modified to N6-succinyllysine: K13 and K18. Phosphoserine is present on S21. K28 is subject to N6-succinyllysine. T33 bears the Phosphothreonine mark. Position 38 is a phosphoserine (S38). An N6-succinyllysine mark is found at K39, K47, and K59. At S69 the chain carries Phosphoserine. An N6-succinyllysine modification is found at K90.

It belongs to the calycin superfamily. Fatty-acid binding protein (FABP) family. In terms of assembly, monomer.

It localises to the cytoplasm. In terms of biological role, this protein binds free fatty acids and their coenzyme A derivatives, bilirubin, and some other small molecules in the cytoplasm; it may be involved in intracellular lipid transport. The polypeptide is Fatty acid-binding protein, liver (FABP1) (Chaetophractus villosus (South American armadillo)).